The sequence spans 264 residues: S-adenosylmethionine decarboxylase proenzyme (264 aa).

The active-site Schiff-base intermediate with substrate; via pyruvic acid is Ser-114. The residue at position 114 (Ser-114) is a Pyruvic acid (Ser); by autocatalysis. The Proton acceptor; for processing activity role is filled by His-119. The active-site Proton donor; for catalytic activity is the Cys-142.

It belongs to the prokaryotic AdoMetDC family. Type 2 subfamily. In terms of assembly, heterooctamer of four alpha and four beta chains arranged as a tetramer of alpha/beta heterodimers. Requires pyruvate as cofactor. Post-translationally, is synthesized initially as an inactive proenzyme. Formation of the active enzyme involves a self-maturation process in which the active site pyruvoyl group is generated from an internal serine residue via an autocatalytic post-translational modification. Two non-identical subunits are generated from the proenzyme in this reaction, and the pyruvate is formed at the N-terminus of the alpha chain, which is derived from the carboxyl end of the proenzyme. The post-translation cleavage follows an unusual pathway, termed non-hydrolytic serinolysis, in which the side chain hydroxyl group of the serine supplies its oxygen atom to form the C-terminus of the beta chain, while the remainder of the serine residue undergoes an oxidative deamination to produce ammonia and the pyruvoyl group blocking the N-terminus of the alpha chain.

The catalysed reaction is S-adenosyl-L-methionine + H(+) = S-adenosyl 3-(methylsulfanyl)propylamine + CO2. Its pathway is amine and polyamine biosynthesis; S-adenosylmethioninamine biosynthesis; S-adenosylmethioninamine from S-adenosyl-L-methionine: step 1/1. Its function is as follows. Catalyzes the decarboxylation of S-adenosylmethionine to S-adenosylmethioninamine (dcAdoMet), the propylamine donor required for the synthesis of the polyamines spermine and spermidine from the diamine putrescine. The polypeptide is S-adenosylmethionine decarboxylase proenzyme (Chromohalobacter salexigens (strain ATCC BAA-138 / DSM 3043 / CIP 106854 / NCIMB 13768 / 1H11)).